Consider the following 162-residue polypeptide: Phosphopantetheine adenylyltransferase (162 aa).

Thr9 provides a ligand contact to substrate. Residues 9–10 (TF) and His17 contribute to the ATP site. Lys41, Leu73, and Arg87 together coordinate substrate. ATP is bound by residues 88-90 (GLR), Glu98, and 123-129 (LSYISSS).

It belongs to the bacterial CoaD family. Homohexamer. The cofactor is Mg(2+).

The protein localises to the cytoplasm. The enzyme catalyses (R)-4'-phosphopantetheine + ATP + H(+) = 3'-dephospho-CoA + diphosphate. The protein operates within cofactor biosynthesis; coenzyme A biosynthesis; CoA from (R)-pantothenate: step 4/5. Its function is as follows. Reversibly transfers an adenylyl group from ATP to 4'-phosphopantetheine, yielding dephospho-CoA (dPCoA) and pyrophosphate. This is Phosphopantetheine adenylyltransferase from Teredinibacter turnerae (strain ATCC 39867 / T7901).